Reading from the N-terminus, the 433-residue chain is Protein root UVB sensitive 2, chloroplastic (433 aa).

The protein belongs to the RUS1 family. As to quaternary structure, interacts (via the DUF647 domain) with RUS1 (via the DUF647 domain). As to expression, expressed throughout the plant, with a higher expression near the root apical meristem, in the cortex region of the root elongation zone, in lateral roots and emerging lateral roots. Not detected in extreme root apical meristem or root cap.

The protein localises to the plastid. In terms of biological role, involved in a root UV-B sensing pathway and in the protection against the hypersensitivity to very low-fluence-rate (VLF) UV-B. RSU1 and RUS2 are probably both negative modulators of the same UV-B perception pathway, which when overstimulated in the roots causes a block to postgermination development. Required for polar auxin transport and to maintain the normal levels of PIN proteins in the root. The protein is Protein root UVB sensitive 2, chloroplastic of Arabidopsis thaliana (Mouse-ear cress).